Here is a 126-residue protein sequence, read N- to C-terminus: Ejaculatory bulb-specific protein 3 (126 aa).

The signal sequence occupies residues 1–17 (MKMILALVVLGLVLVAA).

The protein belongs to the insect A10/OS-D protein family. As to expression, specifically expressed in the ejaculatory bulb and seminal fluid.

It is found in the secreted. Protein component of the posterior mating plug. The protein is Ejaculatory bulb-specific protein 3 of Drosophila melanogaster (Fruit fly).